We begin with the raw amino-acid sequence, 288 residues long: Aquaporin PIP1-5 (288 aa).

A disordered region spans residues Met-1–Pro-36. Transmembrane regions (helical) follow at residues Ile-57–Val-77 and Ile-92–His-114. An NPA 1 motif is present at residues Asn-116–Ala-118. 3 consecutive transmembrane segments (helical) span residues Leu-135 to Phe-155, Gly-177 to Ala-197, and Ile-211 to Ile-231. The short motif at Asn-237–Ala-239 is the NPA 2 element. The helical transmembrane segment at Ile-259 to Ile-279 threads the bilayer.

It belongs to the MIP/aquaporin (TC 1.A.8) family. PIP (TC 1.A.8.11) subfamily. As to expression, highly expressed in roots and at lower levels in anthers and silks.

The protein resides in the cell membrane. In terms of biological role, water channel required to facilitate the transport of water across cell membrane. In Zea mays (Maize), this protein is Aquaporin PIP1-5 (PIP1-5).